Reading from the N-terminus, the 335-residue chain is Glyceraldehyde-3-phosphate dehydrogenase (335 aa).

Residues 10-11 (RI), D33, R77, and S119 contribute to the NAD(+) site. D-glyceraldehyde 3-phosphate is bound by residues 150–152 (SCT), T181, 210–211 (TG), and R233. The active-site Nucleophile is the C151. N315 provides a ligand contact to NAD(+).

This sequence belongs to the glyceraldehyde-3-phosphate dehydrogenase family. In terms of assembly, homotetramer.

Its subcellular location is the cytoplasm. It carries out the reaction D-glyceraldehyde 3-phosphate + phosphate + NAD(+) = (2R)-3-phospho-glyceroyl phosphate + NADH + H(+). Its pathway is carbohydrate degradation; glycolysis; pyruvate from D-glyceraldehyde 3-phosphate: step 1/5. Its function is as follows. Catalyzes the oxidative phosphorylation of glyceraldehyde 3-phosphate (G3P) to 1,3-bisphosphoglycerate (BPG) using the cofactor NAD. The first reaction step involves the formation of a hemiacetal intermediate between G3P and a cysteine residue, and this hemiacetal intermediate is then oxidized to a thioester, with concomitant reduction of NAD to NADH. The reduced NADH is then exchanged with the second NAD, and the thioester is attacked by a nucleophilic inorganic phosphate to produce BPG. This Chlamydia pneumoniae (Chlamydophila pneumoniae) protein is Glyceraldehyde-3-phosphate dehydrogenase (gap).